Consider the following 308-residue polypeptide: Glutathione synthetase (308 aa).

The 184-residue stretch at 117–300 (KLLPLSFPKF…LERDCWDYFE (184 aa)) folds into the ATP-grasp domain. 143 to 198 (YAEYGDIVLKPLYDYGGNGVCRICGRADVGAISSAMVERYEAPLVAQQFIDDISSD) lines the ATP pocket. Residues Glu271 and Asn273 each coordinate Mg(2+).

It belongs to the prokaryotic GSH synthase family. It depends on Mg(2+) as a cofactor. Requires Mn(2+) as cofactor.

It carries out the reaction gamma-L-glutamyl-L-cysteine + glycine + ATP = glutathione + ADP + phosphate + H(+). The protein operates within sulfur metabolism; glutathione biosynthesis; glutathione from L-cysteine and L-glutamate: step 2/2. The chain is Glutathione synthetase from Anaplasma centrale.